The sequence spans 189 residues: dCTP deaminase (189 aa).

DCTP is bound by residues 112–117 (KSTYAR), 136–138 (TLE), Gln-157, Tyr-171, and Gln-181. Catalysis depends on Glu-138, which acts as the Proton donor/acceptor.

It belongs to the dCTP deaminase family. As to quaternary structure, homotrimer.

It catalyses the reaction dCTP + H2O + H(+) = dUTP + NH4(+). It functions in the pathway pyrimidine metabolism; dUMP biosynthesis; dUMP from dCTP (dUTP route): step 1/2. Catalyzes the deamination of dCTP to dUTP. The polypeptide is dCTP deaminase (Leptothrix cholodnii (strain ATCC 51168 / LMG 8142 / SP-6) (Leptothrix discophora (strain SP-6))).